Reading from the N-terminus, the 283-residue chain is MSAETELLGMPESLKDIKHIILVLSGKGGVGKSSVTTQTALTLCLKGYKVGVLDIDLTGPSLPRMFGLENKQVYQASKGWIPVSVPTTSGGELKLMSLGFLLDDRGNSVVWRGPKKSAMIKQFIKDVDWGDLDYLIIDTPPGTSDEHISIAEELRWAAPDGAIIVTTPQGVATADVRKEINFCKKVNFNILGVIENMSGFICPHCAECTDIFSRGGGFKLASEYNVPYLGNIPIDPTFVELIEKQTGFKESLVDLYKDSGLYVIFSKILDNVLNGEVKSGTDQ.

26-33 lines the ATP pocket; the sequence is GKGGVGKS. Positions 202 and 205 each coordinate [4Fe-4S] cluster.

The protein belongs to the Mrp/NBP35 ATP-binding proteins family. NUBP2/CFD1 subfamily. As to quaternary structure, heterotetramer of 2 NBP35 and 2 CFD1 chains. It depends on [4Fe-4S] cluster as a cofactor.

The protein localises to the cytoplasm. Its function is as follows. Component of the cytosolic iron-sulfur (Fe/S) protein assembly (CIA) machinery. Required for maturation of extramitochondrial Fe-S proteins. The NBP35-CFD1 heterotetramer forms a Fe-S scaffold complex, mediating the de novo assembly of an Fe-S cluster and its transfer to target apoproteins. Required for biogenesis and export of both ribosomal subunits, which may reflect a role in assembly of the Fe/S clusters in RLI1, a protein which performs rRNA processing and ribosome export. This Kluyveromyces lactis (strain ATCC 8585 / CBS 2359 / DSM 70799 / NBRC 1267 / NRRL Y-1140 / WM37) (Yeast) protein is Cytosolic Fe-S cluster assembly factor CFD1.